The primary structure comprises 225 residues: ATP-dependent dethiobiotin synthetase BioD (225 aa).

An ATP-binding site is contributed by Glu-15–Phe-20. Mg(2+) is bound at residue Thr-19. The active site involves Lys-40. ATP contacts are provided by residues Asp-57, Glu-118–Gly-121, Asn-178–Arg-179, and Pro-207–Val-209. Residues Asp-57 and Glu-118 each coordinate Mg(2+).

This sequence belongs to the dethiobiotin synthetase family. In terms of assembly, homodimer. It depends on Mg(2+) as a cofactor.

It is found in the cytoplasm. The enzyme catalyses (7R,8S)-7,8-diammoniononanoate + CO2 + ATP = (4R,5S)-dethiobiotin + ADP + phosphate + 3 H(+). Its pathway is cofactor biosynthesis; biotin biosynthesis; biotin from 7,8-diaminononanoate: step 1/2. Catalyzes a mechanistically unusual reaction, the ATP-dependent insertion of CO2 between the N7 and N8 nitrogen atoms of 7,8-diaminopelargonic acid (DAPA, also called 7,8-diammoniononanoate) to form a ureido ring. The polypeptide is ATP-dependent dethiobiotin synthetase BioD (Aromatoleum aromaticum (strain DSM 19018 / LMG 30748 / EbN1) (Azoarcus sp. (strain EbN1))).